Reading from the N-terminus, the 571-residue chain is uncharacterized protein (571 aa).

The interval 1-25 (MAPSVATSLKAEILPSPRTSSPSSN) is disordered. The FAD-binding FR-type domain occupies 135-389 (FSVFPAPILD…RGLHKNAFAT (255 aa)). The segment at 447–479 (NPLQKSSDDDASSTVSQQTETEMDSFEVKKDGT) is disordered.

Belongs to the flavoprotein pyridine nucleotide cytochrome reductase family. The cofactor is FAD.

This is an uncharacterized protein from Schizosaccharomyces pombe (strain 972 / ATCC 24843) (Fission yeast).